The following is a 36-amino-acid chain: Pancreatic polypeptide (36 aa).

Residue F36 is modified to Phenylalanine amide.

The protein belongs to the NPY family.

It localises to the secreted. Functionally, hormone secreted by pancreatic cells that acts as a regulator of pancreatic and gastrointestinal functions. The chain is Pancreatic polypeptide (ppy) from Rana temporaria (European common frog).